The chain runs to 376 residues: 23S rRNA (uracil(747)-C(5))-methyltransferase RlmC (376 aa).

[4Fe-4S] cluster-binding residues include Cys3, Cys11, Cys14, and Cys87. 4 residues coordinate S-adenosyl-L-methionine: Gln212, Phe241, Glu262, and Asn307. Cys334 acts as the Nucleophile in catalysis.

Belongs to the class I-like SAM-binding methyltransferase superfamily. RNA M5U methyltransferase family. RlmC subfamily.

The enzyme catalyses uridine(747) in 23S rRNA + S-adenosyl-L-methionine = 5-methyluridine(747) in 23S rRNA + S-adenosyl-L-homocysteine + H(+). Catalyzes the formation of 5-methyl-uridine at position 747 (m5U747) in 23S rRNA. This is 23S rRNA (uracil(747)-C(5))-methyltransferase RlmC from Pectobacterium carotovorum subsp. carotovorum (strain PC1).